The primary structure comprises 609 residues: Dynamin-like protein 2 (609 aa).

The segment at 1 to 16 is inserts into assembly domain of DLP1, required for tetramerization; that stretch reads MQINLLNDFIKAYENT. The tract at residues 17-25 is linker; sequence YSVSFDDSF. A Dynamin-type G domain is found at 63–310; that stretch reads NIAIIGQFSS…FVGIFDRLLN (248 aa). A G1 motif region spans residues 68 to 75; that stretch reads GQFSSGKS. 72–76 is a GDP binding site; it reads SGKSS. The segment at 93 to 95 is G2 motif; that stretch reads PVT. Positions 158-161 are G3 motif; the sequence is DTPG. Residues 216-219 are G4 motif; sequence NQKD.

Belongs to the TRAFAC class dynamin-like GTPase superfamily. Dynamin/Fzo/YdjA family. In terms of assembly, forms a 2:2 heterotetramer with DLP1. DLP2 forms a central back-to-back dimer flanked on each side by a DLP1 subunit. In the crystal structures the 2 DLP1 subunits are in very different conformations.

The protein resides in the cytoplasm. It is found in the cytosol. It carries out the reaction GTP + H2O = GDP + phosphate + H(+). Functionally, the heterotetrameric DLP1(2)-DLP2(2) complex tethers liposomes and may mediate their fusion. Initial binding is probably mediated by DLP1, while DLP2 couples DLP1 subunits and increases the effective reach of the complex up to 45 nm. The role of the nucleotide is unknown. This subunit alone very weakly binds to liposomes; GTP, GDP, GMPPCP and GMPPNP do not change heterotetramer binding. Tetramerization is required for GTPase activity, suggesting the GTPase domains (dynamin-type G) from DLP1 and DLP2 must dimerize to reconstitute the GTPase active site. The chain is Dynamin-like protein 2 from Campylobacter jejuni subsp. jejuni serotype O:23/36 (strain 81-176).